Consider the following 271-residue polypeptide: Intercellular adhesion molecule 4 (271 aa).

An N-terminal signal peptide occupies residues 1–22 (MGSLFPLSLLFFLAAAYPGVGS). Over 23 to 240 (ALGRRTKRAQ…MLAWSPAPTA (218 aa)) the chain is Extracellular. 2 Ig-like C2-type domains span residues 62 to 124 (GKSV…TRWA) and 146 to 217 (GRKY…LNLD). Asn68, Asn78, Asn190, and Asn223 each carry an N-linked (GlcNAc...) asparagine glycan. 4 disulfide bridges follow: Cys69–Cys113, Cys69–Cys117, Cys73–Cys117, and Cys153–Cys210. Residues 241–261 (LASGSIAALVGILLTVGAAYL) form a helical membrane-spanning segment. The Cytoplasmic portion of the chain corresponds to 262–271 (CKCLAMKSQA).

This sequence belongs to the immunoglobulin superfamily. ICAM family. N- and O-glycosylated. As to expression, erythrocytes.

It localises to the cell membrane. Its subcellular location is the secreted. ICAM proteins are ligands for the leukocyte adhesion protein LFA-1 (integrin alpha-L/beta-2). ICAM4 is also a ligand for alpha-4/beta-1 and alpha-V integrins. The protein is Intercellular adhesion molecule 4 (ICAM4) of Homo sapiens (Human).